The following is a 1568-amino-acid chain: Agglutinin-like protein 7 (1568 aa).

The signal sequence occupies residues 1–18 (MKKLYLLYLLASFTTVIS). Cystine bridges form between Cys-74–Cys-151, Cys-97–Cys-113, Cys-206–Cys-299, and Cys-228–Cys-257. 4 ALS repeats span residues 403-434 (TTLT…VKIP), 441-471 (ITTQ…IKEP), 476-507 (VTTT…IKEP), and 512-543 (VTTT…IHDP). Disordered regions lie at residues 546–662 (ESSS…SSSS), 721–743 (LSSD…FPHT), and 767–832 (VSLT…SIPT). Composition is skewed to low complexity over residues 547–662 (SSSS…SSSS), 721–738 (LSSD…SPSD), 768–793 (SLTS…SPST), and 801–824 (SSSF…ILSE). Residue Asn-559 is glycosylated (N-linked (GlcNAc...) asparagine). Asn-851 is a glycosylation site (N-linked (GlcNAc...) asparagine). Disordered stretches follow at residues 860-1030 (VVSS…VASE) and 1046-1097 (EVVS…ENSD). Residues 872-904 (ESSVSVTSESSESVTSESVASESVTSESVTAVS) are compositionally biased toward low complexity. Residues 909–918 (LYTTSEEVST) show a composition bias toward polar residues. Residues 919 to 945 (SDSNSGMSSPIPSSEQRSSIPIMSSSD) show a composition bias toward low complexity. The span at 956–992 (GTILSEESSDSIPTTFSTRYWSPSGMSSRHYTNSTET) shows a compositional bias: polar residues. N-linked (GlcNAc...) asparagine glycosylation is present at Asn-988. 2 stretches are compositionally biased toward low complexity: residues 993-1002 (SVSDVVSSSV) and 1009-1030 (ESSV…VASE). Over residues 1046 to 1062 (EVVSTSDSKIVPSTSVP) the composition is skewed to polar residues. Positions 1063 to 1077 (SSEQRSSIPIMSSSD) are enriched in low complexity. Asn-1188 is a glycosylation site (N-linked (GlcNAc...) asparagine). 2 disordered regions span residues 1194–1220 (LGMS…EIEL) and 1271–1305 (GLSD…ESLG). Composition is skewed to polar residues over residues 1272 to 1286 (LSDS…SNRS) and 1294 to 1303 (DNTISISRES). Residue Asn-1284 is glycosylated (N-linked (GlcNAc...) asparagine). The GPI-anchor amidated serine moiety is linked to residue Ser-1548. Positions 1549 to 1568 (GSVSKYSLWMMAFYMLFGLF) are cleaved as a propeptide — removed in mature form.

It belongs to the ALS family. Post-translationally, the GPI-anchor is attached to the protein in the endoplasmic reticulum and serves to target the protein to the cell surface. There, the glucosamine-inositol phospholipid moiety is cleaved off and the GPI-modified mannoprotein is covalently attached via its lipidless GPI glycan remnant to the 1,6-beta-glucan of the outer cell wall layer.

Its subcellular location is the cell membrane. It is found in the secreted. The protein localises to the cell wall. In terms of biological role, cell surface adhesion protein which mediates both yeast-to-host tissue adherence and yeast aggregation. Plays an important role in the pathogenesis of C.albicans infections. This is Agglutinin-like protein 7 (ALS7) from Candida albicans (strain SC5314 / ATCC MYA-2876) (Yeast).